The chain runs to 80 residues: RNA-binding protein Hfq (80 aa).

The Sm domain occupies 10 to 70 (DLFLNTVRKQ…ISTIMPGQPM (61 aa)).

The protein belongs to the Hfq family. As to quaternary structure, homohexamer.

Functionally, RNA chaperone that binds small regulatory RNA (sRNAs) and mRNAs to facilitate mRNA translational regulation in response to envelope stress, environmental stress and changes in metabolite concentrations. Also binds with high specificity to tRNAs. The chain is RNA-binding protein Hfq from Agrobacterium fabrum (strain C58 / ATCC 33970) (Agrobacterium tumefaciens (strain C58)).